The following is a 21-amino-acid chain: GMATKAGTIVGKIAKVALNAL.

L21 bears the Leucine amide mark.

Expressed by the skin glands.

It localises to the secreted. In terms of biological role, antimicrobial peptide. This is Peptide PGLa-R4 from Xenopus ruwenzoriensis (Uganda clawed frog).